The following is a 64-amino-acid chain: Large ribosomal subunit protein bL35 (64 aa).

It belongs to the bacterial ribosomal protein bL35 family.

This is Large ribosomal subunit protein bL35 from Desulforudis audaxviator (strain MP104C).